Reading from the N-terminus, the 336-residue chain is Probable allantoicase (336 aa).

It belongs to the allantoicase family.

The catalysed reaction is allantoate + H2O = (S)-ureidoglycolate + urea. It functions in the pathway nitrogen metabolism; (S)-allantoin degradation; (S)-ureidoglycolate from allantoate (aminidohydrolase route): step 1/1. In Acinetobacter baumannii (strain AYE), this protein is Probable allantoicase.